We begin with the raw amino-acid sequence, 155 residues long: Small ribosomal subunit protein uS7 (155 aa).

Belongs to the universal ribosomal protein uS7 family. As to quaternary structure, part of the 30S ribosomal subunit. Contacts proteins S9 and S11.

Its function is as follows. One of the primary rRNA binding proteins, it binds directly to 16S rRNA where it nucleates assembly of the head domain of the 30S subunit. Is located at the subunit interface close to the decoding center, probably blocks exit of the E-site tRNA. The polypeptide is Small ribosomal subunit protein uS7 (Halorhodospira halophila (strain DSM 244 / SL1) (Ectothiorhodospira halophila (strain DSM 244 / SL1))).